The primary structure comprises 356 residues: Chorismate synthase (356 aa).

Residues R48 and R54 each contribute to the NADP(+) site. FMN-binding positions include 125-127 (RSS), 237-238 (NA), G282, 297-301 (KPTSS), and R323.

The protein belongs to the chorismate synthase family. As to quaternary structure, homotetramer. FMNH2 serves as cofactor.

It carries out the reaction 5-O-(1-carboxyvinyl)-3-phosphoshikimate = chorismate + phosphate. The protein operates within metabolic intermediate biosynthesis; chorismate biosynthesis; chorismate from D-erythrose 4-phosphate and phosphoenolpyruvate: step 7/7. Functionally, catalyzes the anti-1,4-elimination of the C-3 phosphate and the C-6 proR hydrogen from 5-enolpyruvylshikimate-3-phosphate (EPSP) to yield chorismate, which is the branch point compound that serves as the starting substrate for the three terminal pathways of aromatic amino acid biosynthesis. This reaction introduces a second double bond into the aromatic ring system. The protein is Chorismate synthase of Rhizorhabdus wittichii (strain DSM 6014 / CCUG 31198 / JCM 15750 / NBRC 105917 / EY 4224 / RW1) (Sphingomonas wittichii).